The following is a 175-amino-acid chain: Ribosome maturation factor RimM (175 aa).

In terms of domain architecture, PRC barrel spans 96–175 (DGDYYWKDLI…IIKVDWDPEF (80 aa)).

Belongs to the RimM family. As to quaternary structure, binds ribosomal protein uS19.

It localises to the cytoplasm. Functionally, an accessory protein needed during the final step in the assembly of 30S ribosomal subunit, possibly for assembly of the head region. Essential for efficient processing of 16S rRNA. May be needed both before and after RbfA during the maturation of 16S rRNA. It has affinity for free ribosomal 30S subunits but not for 70S ribosomes. The chain is Ribosome maturation factor RimM from Baumannia cicadellinicola subsp. Homalodisca coagulata.